A 115-amino-acid chain; its full sequence is Large ribosomal subunit protein bL19 (115 aa).

It belongs to the bacterial ribosomal protein bL19 family.

In terms of biological role, this protein is located at the 30S-50S ribosomal subunit interface and may play a role in the structure and function of the aminoacyl-tRNA binding site. The sequence is that of Large ribosomal subunit protein bL19 from Lactobacillus acidophilus (strain ATCC 700396 / NCK56 / N2 / NCFM).